Consider the following 352-residue polypeptide: 4-hydroxy-3-methylbut-2-en-1-yl diphosphate synthase (flavodoxin) (352 aa).

[4Fe-4S] cluster contacts are provided by C263, C266, C298, and E305.

The protein belongs to the IspG family. Requires [4Fe-4S] cluster as cofactor.

The catalysed reaction is (2E)-4-hydroxy-3-methylbut-2-enyl diphosphate + oxidized [flavodoxin] + H2O + 2 H(+) = 2-C-methyl-D-erythritol 2,4-cyclic diphosphate + reduced [flavodoxin]. Its pathway is isoprenoid biosynthesis; isopentenyl diphosphate biosynthesis via DXP pathway; isopentenyl diphosphate from 1-deoxy-D-xylulose 5-phosphate: step 5/6. Its function is as follows. Converts 2C-methyl-D-erythritol 2,4-cyclodiphosphate (ME-2,4cPP) into 1-hydroxy-2-methyl-2-(E)-butenyl 4-diphosphate. The polypeptide is 4-hydroxy-3-methylbut-2-en-1-yl diphosphate synthase (flavodoxin) (Sulfurimonas denitrificans (strain ATCC 33889 / DSM 1251) (Thiomicrospira denitrificans (strain ATCC 33889 / DSM 1251))).